Reading from the N-terminus, the 168-residue chain is uncharacterized protein (168 aa).

Residues 1–52 (MVLGLASFPESLSSQSETATQPRRPSVKWDLGSDYRKGTEETTASGSNFRRE) form a disordered region. Over residues 10-23 (ESLSSQSETATQPR) the composition is skewed to polar residues. Residues 31-40 (LGSDYRKGTE) show a composition bias toward basic and acidic residues.

This is an uncharacterized protein from Mus musculus (Mouse).